Reading from the N-terminus, the 235-residue chain is RNA-free ribonuclease P (235 aa).

This sequence belongs to the HARP family.

It carries out the reaction Endonucleolytic cleavage of RNA, removing 5'-extranucleotides from tRNA precursor.. In terms of biological role, RNA-free RNase P that catalyzes the removal of the 5'-leader sequence from pre-tRNA to produce the mature 5'-terminus. In Methanothrix thermoacetophila (strain DSM 6194 / JCM 14653 / NBRC 101360 / PT) (Methanosaeta thermophila), this protein is RNA-free ribonuclease P.